The sequence spans 198 residues: MKEFIIKANKAVTNGEINLKDLPGSSGRLDLICRCVNSAFFLSHDLRRDTIFYSVNYGNPNPPVALKFIGDELKRLSPDERSIAMFIQKALSKDASEIWKESTSGIYYSNHEFKEIILEKKNSGKKIFYLHLNGKPLENFDFKNESDVVFILGDHIGLSKEDEEFLEEIGAEQISLSPLELHADHCIILVHNVLDRLK.

Residues leucine 130, glycine 153, 176-181 (LSPLEL), and cysteine 186 each bind S-adenosyl-L-methionine.

This sequence belongs to the methyltransferase superfamily. TrmY family. In terms of assembly, homodimer.

The protein localises to the cytoplasm. The catalysed reaction is pseudouridine(54) in tRNA + S-adenosyl-L-methionine = N(1)-methylpseudouridine(54) in tRNA + S-adenosyl-L-homocysteine + H(+). In terms of biological role, specifically catalyzes the N1-methylation of pseudouridine at position 54 (Psi54) in tRNAs. The polypeptide is tRNA (pseudouridine(54)-N(1))-methyltransferase (Methanococcus vannielii (strain ATCC 35089 / DSM 1224 / JCM 13029 / OCM 148 / SB)).